The primary structure comprises 141 residues: Small ribosomal subunit protein uS12 (141 aa).

The protein belongs to the universal ribosomal protein uS12 family. As to quaternary structure, part of the 30S ribosomal subunit.

Its function is as follows. With S4 and S5 plays an important role in translational accuracy. Located at the interface of the 30S and 50S subunits. The polypeptide is Small ribosomal subunit protein uS12 (Methanothermobacter thermautotrophicus (strain ATCC 29096 / DSM 1053 / JCM 10044 / NBRC 100330 / Delta H) (Methanobacterium thermoautotrophicum)).